The sequence spans 293 residues: Glycine N-methyltransferase (293 aa).

An N-acetylvaline modification is found at valine 2. (6S)-5-methyl-5,6,7,8-tetrahydrofolate is bound by residues serine 4 and tyrosine 6. Serine 10 is modified (phosphoserine). Residues tyrosine 22, tryptophan 31, tyrosine 34, and arginine 41 each coordinate S-adenosyl-L-methionine. Tyrosine 34 bears the Phosphotyrosine mark. Position 46 is an N6-succinyllysine (lysine 46). Residues alanine 65, 86–88 (DAS), 117–118 (NW), leucine 137, 137–140 (LGNS), and arginine 176 each bind S-adenosyl-L-methionine. An N6-succinyllysine mark is found at lysine 191, lysine 196, and lysine 201. A (6S)-5-methyl-5,6,7,8-tetrahydrofolate-binding site is contributed by histidine 215. S-adenosyl-L-methionine is bound at residue tyrosine 221. Arginine 240 lines the (6S)-5-methyl-5,6,7,8-tetrahydrofolate pocket.

It belongs to the class I-like SAM-binding methyltransferase superfamily. Glycine N-methyltransferase family. In terms of assembly, homotetramer.

It localises to the cytoplasm. The enzyme catalyses glycine + S-adenosyl-L-methionine = sarcosine + S-adenosyl-L-homocysteine + H(+). Inhibited by 5-methyltetrahydrofolate monoglutamate and by 5-methyltetrahydrofolate pentaglutamate, inhibition is much more effective by the pentaglutamate form than by the monoglutamate form. Two molecules of 5-methyltetrahydrofolate are bound per tetramer. The binding sites are localized between subunits. Inhibitor binding may preclude movements of the polypeptide chain that are necessary for enzyme activity. Catalyzes the methylation of glycine by using S-adenosylmethionine (AdoMet) to form N-methylglycine (sarcosine) with the concomitant production of S-adenosylhomocysteine (AdoHcy), a reaction regulated by the binding of 5-methyltetrahydrofolate. Plays an important role in the regulation of methyl group metabolism by regulating the ratio between S-adenosyl-L-methionine and S-adenosyl-L-homocysteine. This Mus musculus (Mouse) protein is Glycine N-methyltransferase (Gnmt).